A 1516-amino-acid polypeptide reads, in one-letter code: EF-hand calcium-binding domain-containing protein 6 (1516 aa).

Residues 1-23 (MKRNGTRLNFAKANSTKSGSTRA) are disordered. Over residues 12-21 (KANSTKSGST) the composition is skewed to polar residues. EF-hand domains follow at residues 96–131 (SRRD…FLIP), 197–232 (RNMR…FCLR), 321–356 (KSYE…FIYR), 444–462 (SGHI…MVAK), and 528–563 (RNLQ…FCPY). 9 residues coordinate Ca(2+): Asp-109, Asn-111, Asn-113, Met-115, Asp-120, Asp-210, Asn-212, Thr-214, and Glu-221. Positions 618-638 (EEPGQQDERTQPSGEKTSEIN) are disordered. Polar residues predominate over residues 628–638 (QPSGEKTSEIN). EF-hand domains follow at residues 674 to 690 (KINQ…SGMP), 763 to 798 (ESFR…LQLN), 905 to 940 (LTPR…RYSP), 1086 to 1121 (SSQP…VCQK), 1193 to 1228 (SHYH…HIQI), and 1229 to 1264 (LTDE…ERVP). Residues Asp-776, Asp-778, Asp-780, and Asp-787 each coordinate Ca(2+). Position 906 is a phosphothreonine (Thr-906). The segment at 1263–1318 (VPSPPMAAGDSGESTMAQRGSSAPEFSQGTRSNLYSPPRDSRVGLKSRSHPCTPVG) is disordered. Ser-1265 is subject to Phosphoserine. The segment covering 1274–1297 (GESTMAQRGSSAPEFSQGTRSNLY) has biased composition (polar residues). A Phosphoserine modification is found at Ser-1311. Thr-1315 and Thr-1319 each carry phosphothreonine. An interaction with PARK7 region spans residues 1318–1516 (GTPPLQNCEP…YNDFLRAFLQ (199 aa)). EF-hand domains follow at residues 1348-1373 (KEKD…FKLD), 1374-1409 (ISRE…LLKA), 1454-1484 (MRRS…YSIN), and 1485-1516 (LSEE…AFLQ). The segment at 1422 to 1516 (NADKMKEAGM…YNDFLRAFLQ (95 aa)) is interaction with AR. 4 residues coordinate Ca(2+): Asp-1462, Asn-1464, Thr-1466, and Asp-1473.

Microtubule inner protein component of sperm flagellar doublet microtubules. Binds PARK7. Part of a ternary complex containing PARK7, EFCAB6/DJBP and AR.

The protein localises to the nucleus. It localises to the cytoplasm. It is found in the cytoskeleton. Its subcellular location is the flagellum axoneme. Negatively regulates the androgen receptor by recruiting histone deacetylase complex, and protein DJ-1 antagonizes this inhibition by abrogation of this complex. Microtubule inner protein (MIP) part of the dynein-decorated doublet microtubules (DMTs) in cilia axoneme, which is required for motile cilia beating. The chain is EF-hand calcium-binding domain-containing protein 6 (Efcab6) from Mus musculus (Mouse).